We begin with the raw amino-acid sequence, 321 residues long: MLIDSYDRVVDYLRISVTERCNFRCQYCMPEKPFSWVPKENLLTFEELFLFVKVAIDEGIRKIRITGGEPLLREDLDKFIKMIFDYAPDIDLAMTTNAYLLKSTAQKLRDAGLKRLNVSIDTLKPEVAFAIAGKDVLKNVLDGVNEALAVGLKVKVNMVPMKNMNAQEIVDVLEYSKKRGMTIRFIEYMENKFASKEISGLKSDELLSMLREHYEFVDEGYDGASPSRYYKMSDGYRFGIIEPYGDDFCKQCNRIRLTAEGQLIPCLYFDEALSIAKSIKEGDIVAASEVLRDVVKNKPEKNRWGGEDGEVSTRAFYETGG.

Residues 5–227 (SYDRVVDYLR…DEGYDGASPS (223 aa)) enclose the Radical SAM core domain. Arg14 is a binding site for GTP. Positions 21 and 25 each coordinate [4Fe-4S] cluster. Residue Tyr27 participates in S-adenosyl-L-methionine binding. Residue Cys28 coordinates [4Fe-4S] cluster. Residue Arg64 coordinates GTP. Residue Gly68 coordinates S-adenosyl-L-methionine. GTP is bound at residue Thr95. An S-adenosyl-L-methionine-binding site is contributed by Ser119. Lys155 provides a ligand contact to GTP. An S-adenosyl-L-methionine-binding site is contributed by Met189. Positions 249 and 252 each coordinate [4Fe-4S] cluster. 254 to 256 (RIR) serves as a coordination point for GTP. Cys266 lines the [4Fe-4S] cluster pocket.

It belongs to the radical SAM superfamily. MoaA family. In terms of assembly, monomer and homodimer. It depends on [4Fe-4S] cluster as a cofactor.

It carries out the reaction GTP + AH2 + S-adenosyl-L-methionine = (8S)-3',8-cyclo-7,8-dihydroguanosine 5'-triphosphate + 5'-deoxyadenosine + L-methionine + A + H(+). It participates in cofactor biosynthesis; molybdopterin biosynthesis. Catalyzes the cyclization of GTP to (8S)-3',8-cyclo-7,8-dihydroguanosine 5'-triphosphate. The polypeptide is GTP 3',8-cyclase (Sulfurimonas denitrificans (strain ATCC 33889 / DSM 1251) (Thiomicrospira denitrificans (strain ATCC 33889 / DSM 1251))).